We begin with the raw amino-acid sequence, 187 residues long: Putative manganese efflux pump MntP (187 aa).

A run of 6 helical transmembrane segments spans residues 3 to 23 (YYTLWVIAFGLSMDAFAVSVG), 39 to 59 (IALCFGLFQACMPLLGYYVGS), 65 to 85 (ISEFDHWIAFALLCVIGINMI), 106 to 126 (LTMLGVATSIDALAMGVSFAF), 129 to 149 (VNIWTAAAIIGITTTILSLFG), and 166 to 186 (LLGGIILIAMGVKVLIEHRVF).

It belongs to the MntP (TC 9.B.29) family.

The protein localises to the cell inner membrane. In terms of biological role, probably functions as a manganese efflux pump. This Actinobacillus succinogenes (strain ATCC 55618 / DSM 22257 / CCUG 43843 / 130Z) protein is Putative manganese efflux pump MntP.